We begin with the raw amino-acid sequence, 279 residues long: 3-methyl-2-oxobutanoate hydroxymethyltransferase (279 aa).

The Mg(2+) site is built by Asp43 and Asp82. 3-methyl-2-oxobutanoate-binding positions include 43 to 44 (DS), Asp82, and Lys112. Glu114 contacts Mg(2+). Glu181 (proton acceptor) is an active-site residue.

This sequence belongs to the PanB family. In terms of assembly, homodecamer; pentamer of dimers. The cofactor is Mg(2+).

It is found in the cytoplasm. The enzyme catalyses 3-methyl-2-oxobutanoate + (6R)-5,10-methylene-5,6,7,8-tetrahydrofolate + H2O = 2-dehydropantoate + (6S)-5,6,7,8-tetrahydrofolate. The protein operates within cofactor biosynthesis; (R)-pantothenate biosynthesis; (R)-pantoate from 3-methyl-2-oxobutanoate: step 1/2. In terms of biological role, catalyzes the reversible reaction in which hydroxymethyl group from 5,10-methylenetetrahydrofolate is transferred onto alpha-ketoisovalerate to form ketopantoate. The chain is 3-methyl-2-oxobutanoate hydroxymethyltransferase from Bacillus pumilus (strain SAFR-032).